The chain runs to 533 residues: Glucose-6-phosphate isomerase (533 aa).

Catalysis depends on Glu-341, which acts as the Proton donor. Catalysis depends on residues His-372 and Lys-501.

Belongs to the GPI family.

It is found in the cytoplasm. It carries out the reaction alpha-D-glucose 6-phosphate = beta-D-fructose 6-phosphate. It participates in carbohydrate biosynthesis; gluconeogenesis. It functions in the pathway carbohydrate degradation; glycolysis; D-glyceraldehyde 3-phosphate and glycerone phosphate from D-glucose: step 2/4. Functionally, catalyzes the reversible isomerization of glucose-6-phosphate to fructose-6-phosphate. The protein is Glucose-6-phosphate isomerase of Cereibacter sphaeroides (strain ATCC 17023 / DSM 158 / JCM 6121 / CCUG 31486 / LMG 2827 / NBRC 12203 / NCIMB 8253 / ATH 2.4.1.) (Rhodobacter sphaeroides).